The chain runs to 471 residues: Trimethyllysine dioxygenase (471 aa).

Histidine 251 and aspartate 253 together coordinate Fe cation. Residues 272–302 (KAAPSRPPPPPPPPPPPSEEKEAAGSAAGEA) are disordered. Positions 276–288 (SRPPPPPPPPPPP) are enriched in pro residues. Histidine 430 contacts Fe cation.

This sequence belongs to the gamma-BBH/TMLD family. Fe(2+) serves as cofactor. The cofactor is L-ascorbate.

The protein localises to the cytoplasm. The catalysed reaction is N(6),N(6),N(6)-trimethyl-L-lysine + 2-oxoglutarate + O2 = (3S)-3-hydroxy-N(6),N(6),N(6)-trimethyl-L-lysine + succinate + CO2. Its pathway is amine and polyamine biosynthesis; carnitine biosynthesis. Functionally, converts trimethyllysine (TML) into hydroxytrimethyllysine (HTML). The polypeptide is Trimethyllysine dioxygenase (cbs-1) (Neurospora crassa (strain ATCC 24698 / 74-OR23-1A / CBS 708.71 / DSM 1257 / FGSC 987)).